Reading from the N-terminus, the 101-residue chain is Large ribosomal subunit protein uL23 (101 aa).

The protein belongs to the universal ribosomal protein uL23 family. As to quaternary structure, part of the 50S ribosomal subunit. Contacts protein L29, and trigger factor when it is bound to the ribosome.

In terms of biological role, one of the early assembly proteins it binds 23S rRNA. One of the proteins that surrounds the polypeptide exit tunnel on the outside of the ribosome. Forms the main docking site for trigger factor binding to the ribosome. This chain is Large ribosomal subunit protein uL23, found in Corynebacterium diphtheriae (strain ATCC 700971 / NCTC 13129 / Biotype gravis).